The chain runs to 562 residues: Formate--tetrahydrofolate ligase (562 aa).

71 to 78 (TPAGEGKS) is a binding site for ATP.

Belongs to the formate--tetrahydrofolate ligase family.

It carries out the reaction (6S)-5,6,7,8-tetrahydrofolate + formate + ATP = (6R)-10-formyltetrahydrofolate + ADP + phosphate. The protein operates within one-carbon metabolism; tetrahydrofolate interconversion. The polypeptide is Formate--tetrahydrofolate ligase (Bacillus cereus (strain AH187)).